Reading from the N-terminus, the 365-residue chain is Anhydro-N-acetylmuramic acid kinase (365 aa).

12–19 (GTSLDGID) provides a ligand contact to ATP.

The protein belongs to the anhydro-N-acetylmuramic acid kinase family.

It catalyses the reaction 1,6-anhydro-N-acetyl-beta-muramate + ATP + H2O = N-acetyl-D-muramate 6-phosphate + ADP + H(+). It functions in the pathway amino-sugar metabolism; 1,6-anhydro-N-acetylmuramate degradation. The protein operates within cell wall biogenesis; peptidoglycan recycling. Catalyzes the specific phosphorylation of 1,6-anhydro-N-acetylmuramic acid (anhMurNAc) with the simultaneous cleavage of the 1,6-anhydro ring, generating MurNAc-6-P. Is required for the utilization of anhMurNAc either imported from the medium or derived from its own cell wall murein, and thus plays a role in cell wall recycling. The sequence is that of Anhydro-N-acetylmuramic acid kinase from Rhizorhabdus wittichii (strain DSM 6014 / CCUG 31198 / JCM 15750 / NBRC 105917 / EY 4224 / RW1) (Sphingomonas wittichii).